The sequence spans 160 residues: Transcriptional repressor NrdR (160 aa).

Residues 3–34 fold into a zinc finger; sequence CPSCQNTDSRVLESRAADGGRSVRRRRECLNC. One can recognise an ATP-cone domain in the interval 49 to 139; sequence ITVIKRNGNR…VYRQFRGIDD (91 aa).

The protein belongs to the NrdR family. The cofactor is Zn(2+).

Negatively regulates transcription of bacterial ribonucleotide reductase nrd genes and operons by binding to NrdR-boxes. The sequence is that of Transcriptional repressor NrdR from Synechococcus sp. (strain CC9605).